The primary structure comprises 863 residues: DNA replication licensing factor mcm4 (863 aa).

Residues 1-121 (MSSPTSTPSR…ARQRPDLGSA (121 aa)) are disordered. Composition is skewed to polar residues over residues 54-64 (SPSGDLQSPSG) and 78-99 (SALQ…SSRV). The C4-type zinc-finger motif lies at 306-331 (CQVCAFTTRVEIDRGRISEPSVCKHC). In terms of domain architecture, MCM spans 458-667 (IYERLASALA…YDRRLAHHLV (210 aa)). The ATP site is built by tyrosine 471, arginine 497, lysine 516, serine 517, asparagine 618, arginine 643, arginine 732, and glutamate 735. Residues 642–645 (SRFD) carry the Arginine finger motif.

The protein belongs to the MCM family. In terms of assembly, component of the mcm2-7 complex (RLF-M). The complex forms a toroidal hexameric ring with the proposed subunit order mcm2-mcm6-mcm4-mcm7-mcm3-mcm5. The heterodimer of mmcm3/mcm5 interacts with mcm4, mmcm6, mcm7 and weakly with mcm2. Component of the CMG helicase complex, composed of the mcm2-7 complex, the GINS complex and cdc45. Hyperphosphorylated during mitosis in a mechanism requiring cdc2-cyclin B and other kinases. Undergoes dephosphorylation after exiting mitosis, existing in a partially phosphorylated state in the cytosolic interphase mcm complex which associates with the pre-replication complexes (pre-Rcs). Complete dephosphorylation inactivates the mcm complex, preventing its binding to chromatin. Becomes actively phosphorylated during S phase once the mcm complex is assembled on the chromatin. This chromatin-associated phosphorylation occurs during the activation of the pre-Rcs and is independent of cdks. Phosphorylated by the cdc7-dbf4b complex.

Its subcellular location is the nucleus. It localises to the chromosome. The enzyme catalyses ATP + H2O = ADP + phosphate + H(+). Its function is as follows. Acts as a component of the MCM2-7 complex (MCM complex) which is the replicative helicase essential for 'once per cell cycle' DNA replication initiation and elongation in eukaryotic cells. Core component of CDC45-MCM-GINS (CMG) helicase, the molecular machine that unwinds template DNA during replication, and around which the replisome is built. The active ATPase sites in the MCM2-7 ring are formed through the interaction surfaces of two neighboring subunits such that a critical structure of a conserved arginine finger motif is provided in trans relative to the ATP-binding site of the Walker A box of the adjacent subunit. The six ATPase active sites, however, are likely to contribute differentially to the complex helicase activity. This chain is DNA replication licensing factor mcm4, found in Xenopus tropicalis (Western clawed frog).